The sequence spans 141 residues: ATP synthase epsilon chain (141 aa).

Belongs to the ATPase epsilon chain family. F-type ATPases have 2 components, CF(1) - the catalytic core - and CF(0) - the membrane proton channel. CF(1) has five subunits: alpha(3), beta(3), gamma(1), delta(1), epsilon(1). CF(0) has three main subunits: a, b and c.

Its subcellular location is the cell inner membrane. Its function is as follows. Produces ATP from ADP in the presence of a proton gradient across the membrane. The sequence is that of ATP synthase epsilon chain from Hahella chejuensis (strain KCTC 2396).